A 331-amino-acid chain; its full sequence is Ketol-acid reductoisomerase (NADP(+)) (331 aa).

In terms of domain architecture, KARI N-terminal Rossmann spans 1–181 (MKMYYDADAD…GGTRAGVIET (181 aa)). NADP(+)-binding positions include 24-27 (YGSQ), R47, S50, and 82-85 (DEKQ). Residue H107 is part of the active site. Residue G133 coordinates NADP(+). The 146-residue stretch at 182 to 327 (TFREETETDL…KKLRAMMPWL (146 aa)) folds into the KARI C-terminal knotted domain. D190, E194, E226, and E230 together coordinate Mg(2+). Substrate is bound at residue S251.

This sequence belongs to the ketol-acid reductoisomerase family. It depends on Mg(2+) as a cofactor.

The catalysed reaction is (2R)-2,3-dihydroxy-3-methylbutanoate + NADP(+) = (2S)-2-acetolactate + NADPH + H(+). The enzyme catalyses (2R,3R)-2,3-dihydroxy-3-methylpentanoate + NADP(+) = (S)-2-ethyl-2-hydroxy-3-oxobutanoate + NADPH + H(+). It functions in the pathway amino-acid biosynthesis; L-isoleucine biosynthesis; L-isoleucine from 2-oxobutanoate: step 2/4. It participates in amino-acid biosynthesis; L-valine biosynthesis; L-valine from pyruvate: step 2/4. Its function is as follows. Involved in the biosynthesis of branched-chain amino acids (BCAA). Catalyzes an alkyl-migration followed by a ketol-acid reduction of (S)-2-acetolactate (S2AL) to yield (R)-2,3-dihydroxy-isovalerate. In the isomerase reaction, S2AL is rearranged via a Mg-dependent methyl migration to produce 3-hydroxy-3-methyl-2-ketobutyrate (HMKB). In the reductase reaction, this 2-ketoacid undergoes a metal-dependent reduction by NADPH to yield (R)-2,3-dihydroxy-isovalerate. This chain is Ketol-acid reductoisomerase (NADP(+)), found in Heliobacterium modesticaldum (strain ATCC 51547 / Ice1).